The chain runs to 432 residues: Major royal jelly protein 1 (432 aa).

The signal sequence occupies residues 1 to 19 (MTRLFMLVCLGIVCQGTTG). Asn28, Asn144, and Asn177 each carry an N-linked (GlcNAc...) asparagine glycan. Cystine bridges form between Cys118–Cys150, Cys132–Cys195, and Cys329–Cys416. Pro364 contributes to the 24-methylenecholesterol binding site. Residue His431 is modified to Histidine amide; atypical. Leu432 carries the post-translational modification Leucine amide; atypical.

The protein belongs to the major royal jelly protein family. As to quaternary structure, is present in royal jelly in different forms: monomer (55 kDa), oligomeric subunit (ca. 287-420 kDa), and water-insoluble aggregates in sediment after interaction with fatty acids. Component of the apisin heterooligomer complex consisting of 4 copies of MRJP1 and 4 copies of apisimin, associated with 8 molecules of 24-methylenecholesterol; apisimin forms a bridge connecting two MRJP1 dimers. At low pH multiple apisin octamers stack to form filaments that increase the viscosity of royal jelly; these filaments may be stabilized by bound fatty acid chains. The mandibular gland, where royal jelly is produced, has low pH conditions favouring filament formation, while the higher pH of the insect midgut favors filament disassembly. Post-translationally, N-glycosylated on Asn-28, Asn-144 and Asn-177. Glycosylation is required to prevent apisin multimers from aggregating. In terms of processing, jellein-2 is probably processed to yield jellein-1 and jellein-4. In terms of tissue distribution, found in and secreted from the hypopharyngeal glands of the worker honey bee (at protein level); expression peaks at 12 days post eclosion. Expressed in the brains of worker bees (at protein level); found in antennal lobe, optical lobe and a subpopulation of Kenyon cells in the mushroom body. Found in the ommatidia of worker bees (at protein level). Expressed in the spermatheca of adult queen bees (at protein level); expression levels are higher in mated queens than in virgin queens. Expressed in queen bee ovaries and male drone testes.

It localises to the secreted. The protein resides in the cytoplasm. The protein localises to the cell projection. Its subcellular location is the rhabdomere. It is found in the cytoskeleton. Functionally, most abundant protein component of royal jelly, a substance produced in the hypopharyngeal gland containing proteins, free amino acids, fatty acids, sugars and other nutrients, which is fed to developing larvae by worker nurse bees. Major royal jelly proteins (Mrjps) are high in essential amino acids and probably have a nutritional function in larval food. All larvae are fed some royal jelly (also known as worker jelly) early in their development but it forms the principal source of nutrition for larvae destined to become queen bees. Induces the differentiation of honey bee larvae into queens through an Egfr-mediated signaling pathway. Promotes body size increase by activating p70 S6 kinase, stimulates ovary development by augmenting the titer of vitellogenin (Vg) and juvenile hormone, and reduces developmental time by increasing the activity of mitogen-activated protein kinase and inducing 20-hydroxyecdysone (ecdysterone, 20E) production. Together with apisimin forms the apisin complex that polymerizes at low pH, forming a fiber network and increasing the viscosity of royal jelly. The viscous royal Jelly placed in honeycomb cells containing larvae destined to become queens acts as both a food supply and an adhesive preventing larvae from falling out; queens are reared in special large cells oriented vertically. Produced in the spermatheca of adult queen bees, along with other major royal jelly proteins, where it may act as a nutrient supply for sperm stored by mated queens, or be involved in energy metabolism. Has antibacterial activity against the Gram-positive bacteria S.aureus ATCC 6535, S.saprophyticus and B.subtilis CCT2471, and the Gram-negative bacteria E.coli CCT1371, E.cloacae ATCC 23355, K.pneumoniae ATCC 13883 and P.aeruginosa ATCC 27853, and antifungal activity against C.albicans. Lack cytolytic activity and does not induce rat peritoneal mast cell degranulation. In terms of biological role, lacks antibacterial and antifungal activity. Lacks cytolytic activity and does not induce rat peritoneal mast cell degranulation. The sequence is that of Major royal jelly protein 1 from Apis mellifera (Honeybee).